Here is a 330-residue protein sequence, read N- to C-terminus: MKKSFIHQQQEISFVKNTFTQYLIDKLEIVEVQGPILSQVGDGMQDNLSGIEHPVSVKVLNIPEAEFEVVHSLAKWKRHTLARFGFNEGEGLFVHMKALRPDEDSLDPTHSVYVDQWDWEKVIPDGRRNLDYLKETVEKIYKAIRLTELAVEARFDIESILPKRITFIHTEELVEKYPDLSPKERENAIAKEYGAVFLIGIGGELADGKPHDGRAPDYDDWTTPSENGFKGLNGDILVWNEQLGTAFELSSMGIRVDEDALKRQVVLTGDEDRLEFEWHKTLLRGFFPLTIGGGIGQSRLAMFLLRKKHIGEVQSSVWPKEVRDTFENIL.

Belongs to the class-II aminoacyl-tRNA synthetase family. AsnA subfamily.

The protein localises to the cytoplasm. The enzyme catalyses L-aspartate + NH4(+) + ATP = L-asparagine + AMP + diphosphate + H(+). It participates in amino-acid biosynthesis; L-asparagine biosynthesis; L-asparagine from L-aspartate (ammonia route): step 1/1. This is Aspartate--ammonia ligase from Streptococcus agalactiae serotype Ia (strain ATCC 27591 / A909 / CDC SS700).